Consider the following 755-residue polypeptide: Xaa-Pro dipeptidyl-peptidase (755 aa).

Catalysis depends on charge relay system residues Ser348, Asp468, and His498.

This sequence belongs to the peptidase S15 family. As to quaternary structure, homodimer.

It is found in the cytoplasm. The enzyme catalyses Hydrolyzes Xaa-Pro-|- bonds to release unblocked, N-terminal dipeptides from substrates including Ala-Pro-|-p-nitroanilide and (sequentially) Tyr-Pro-|-Phe-Pro-|-Gly-Pro-|-Ile.. Its function is as follows. Removes N-terminal dipeptides sequentially from polypeptides having unsubstituted N-termini provided that the penultimate residue is proline. The polypeptide is Xaa-Pro dipeptidyl-peptidase (Streptococcus thermophilus).